A 207-amino-acid polypeptide reads, in one-letter code: Porin MspD (207 aa).

The first 24 residues, 1–24, serve as a signal peptide directing secretion; sequence MRYLVMMFALLVSVTLVSPRPANA.

It belongs to the mycobacterial porin (TC 1.B.24) family. As to quaternary structure, octamers. Probably forms a goblet with the wide end on the exterior of the outer membrane and a central channel. It is not known if mixed oligomers of MspD with other Msp subunits form in vivo.

The protein resides in the cell outer membrane. Its subcellular location is the secreted. It localises to the cell wall. Functionally, a backup porin induced when MspA, the major porin, is deleted. It probably forms a water-filled channel which favors the permeation of cations. There are about 2400 porins in wild-type, 800 in an mspA deletion and 150 in a double mspA-mspC deletion. The chain is Porin MspD (mspD) from Mycolicibacterium smegmatis (strain ATCC 700084 / mc(2)155) (Mycobacterium smegmatis).